Here is a 134-residue protein sequence, read N- to C-terminus: Small ribosomal subunit protein uS8 (134 aa).

The protein belongs to the universal ribosomal protein uS8 family. Part of the 30S ribosomal subunit. Contacts proteins S5 and S12.

In terms of biological role, one of the primary rRNA binding proteins, it binds directly to 16S rRNA central domain where it helps coordinate assembly of the platform of the 30S subunit. The polypeptide is Small ribosomal subunit protein uS8 (Fervidobacterium nodosum (strain ATCC 35602 / DSM 5306 / Rt17-B1)).